Here is a 319-residue protein sequence, read N- to C-terminus: Thymidylate synthase (319 aa).

Residues arginine 25 and 181 to 182 (RR) contribute to the dUMP site. Cysteine 201 serves as the catalytic Nucleophile. DUMP is bound by residues 221-224 (RSAD), asparagine 232, and 262-264 (HIY). Aspartate 224 serves as a coordination point for (6R)-5,10-methylene-5,6,7,8-tetrahydrofolate. Alanine 318 contributes to the (6R)-5,10-methylene-5,6,7,8-tetrahydrofolate binding site.

This sequence belongs to the thymidylate synthase family. Bacterial-type ThyA subfamily. In terms of assembly, homodimer.

The protein localises to the cytoplasm. The catalysed reaction is dUMP + (6R)-5,10-methylene-5,6,7,8-tetrahydrofolate = 7,8-dihydrofolate + dTMP. The protein operates within pyrimidine metabolism; dTTP biosynthesis. Functionally, catalyzes the reductive methylation of 2'-deoxyuridine-5'-monophosphate (dUMP) to 2'-deoxythymidine-5'-monophosphate (dTMP) while utilizing 5,10-methylenetetrahydrofolate (mTHF) as the methyl donor and reductant in the reaction, yielding dihydrofolate (DHF) as a by-product. This enzymatic reaction provides an intracellular de novo source of dTMP, an essential precursor for DNA biosynthesis. This is Thymidylate synthase from Oenococcus oeni (strain ATCC BAA-331 / PSU-1).